We begin with the raw amino-acid sequence, 385 residues long: 1-deoxy-D-xylulose 5-phosphate reductoisomerase (385 aa).

NADPH contacts are provided by Thr11, Gly12, Ser13, Ile14, Ala37, Arg38, Asn39, and Asn123. A 1-deoxy-D-xylulose 5-phosphate-binding site is contributed by Lys124. Glu125 lines the NADPH pocket. Asp149 lines the Mn(2+) pocket. Positions 150, 151, 173, and 196 each coordinate 1-deoxy-D-xylulose 5-phosphate. Glu151 contacts Mn(2+). Gly202 is an NADPH binding site. 4 residues coordinate 1-deoxy-D-xylulose 5-phosphate: Ser209, Asn214, Lys215, and Glu218. Glu218 contributes to the Mn(2+) binding site.

This sequence belongs to the DXR family. Mg(2+) is required as a cofactor. It depends on Mn(2+) as a cofactor.

The catalysed reaction is 2-C-methyl-D-erythritol 4-phosphate + NADP(+) = 1-deoxy-D-xylulose 5-phosphate + NADPH + H(+). Its pathway is isoprenoid biosynthesis; isopentenyl diphosphate biosynthesis via DXP pathway; isopentenyl diphosphate from 1-deoxy-D-xylulose 5-phosphate: step 1/6. Catalyzes the NADPH-dependent rearrangement and reduction of 1-deoxy-D-xylulose-5-phosphate (DXP) to 2-C-methyl-D-erythritol 4-phosphate (MEP). The protein is 1-deoxy-D-xylulose 5-phosphate reductoisomerase of Moorella thermoacetica (strain ATCC 39073 / JCM 9320).